The following is a 510-amino-acid chain: NAD(P)H-quinone oxidoreductase subunit 2 B, chloroplastic (510 aa).

The next 13 membrane-spanning stretches (helical) occupy residues 24–44 (LLFFDGSLIFPECILIFGLIL), 57–77 (IPWLYFISSTSLVMSITALLF), 99–119 (IFQFLILLCSTLCIPLSVEYI), 124–144 (MAITEFLLFVLTATIGGMFLC), 149–169 (LITIFVAPECFSLCSYLLSGY), 183–203 (YLLMGGASSSILVHGFSWLYG), 227–247 (PGISIALIFITVGIGFKLSPA), 295–315 (WHLLLEILAILSMILGNLIAI), 323–343 (MLAYSSIGQIGYVIIGIIVGD), 354–374 (YMLFYISMNLGTFACIVLFGL), 395–415 (ALSLALCLLSLGGLPPLAGFF), 418–438 (LYLFWCGWQAGLYFLVLIGLL), and 484–504 (MIVCVIASTIPGISMNPIIAI).

Belongs to the complex I subunit 2 family. NDH is composed of at least 16 different subunits, 5 of which are encoded in the nucleus.

It is found in the plastid. The protein resides in the chloroplast thylakoid membrane. It carries out the reaction a plastoquinone + NADH + (n+1) H(+)(in) = a plastoquinol + NAD(+) + n H(+)(out). It catalyses the reaction a plastoquinone + NADPH + (n+1) H(+)(in) = a plastoquinol + NADP(+) + n H(+)(out). Its function is as follows. NDH shuttles electrons from NAD(P)H:plastoquinone, via FMN and iron-sulfur (Fe-S) centers, to quinones in the photosynthetic chain and possibly in a chloroplast respiratory chain. The immediate electron acceptor for the enzyme in this species is believed to be plastoquinone. Couples the redox reaction to proton translocation, and thus conserves the redox energy in a proton gradient. The sequence is that of NAD(P)H-quinone oxidoreductase subunit 2 B, chloroplastic from Guizotia abyssinica (Niger).